The primary structure comprises 851 residues: DNA mismatch repair protein MutS (851 aa).

602–609 (GPNMSGKS) is a binding site for ATP.

It belongs to the DNA mismatch repair MutS family.

This protein is involved in the repair of mismatches in DNA. It is possible that it carries out the mismatch recognition step. This protein has a weak ATPase activity. The chain is DNA mismatch repair protein MutS from Streptococcus pyogenes serotype M4 (strain MGAS10750).